A 311-amino-acid polypeptide reads, in one-letter code: GTPase Era (311 aa).

Positions 18-185 (RSGFVALIGA…AKYLAESVPN (168 aa)) constitute an Era-type G domain. The segment at 26–33 (GAPNAGKS) is G1. Position 26–33 (26–33 (GAPNAGKS)) interacts with GTP. The interval 52–56 (QTTRA) is G2. The G3 stretch occupies residues 73 to 76 (DTPG). GTP is bound by residues 73–77 (DTPGI) and 135–138 (NKVD). Residues 135–138 (NKVD) form a G4 region. Residues 164-166 (ISA) form a G5 region. Residues 216-293 (LHEELPYAST…HLFLFVKVRE (78 aa)) form the KH type-2 domain.

It belongs to the TRAFAC class TrmE-Era-EngA-EngB-Septin-like GTPase superfamily. Era GTPase family. As to quaternary structure, monomer.

It is found in the cytoplasm. The protein localises to the cell inner membrane. An essential GTPase that binds both GDP and GTP, with rapid nucleotide exchange. Plays a role in 16S rRNA processing and 30S ribosomal subunit biogenesis and possibly also in cell cycle regulation and energy metabolism. The sequence is that of GTPase Era from Brucella suis biovar 1 (strain 1330).